The following is a 1549-amino-acid chain: Zinc finger MYM-type protein 4 (1549 aa).

The residue at position 2 (Ala2) is an N-acetylalanine. A disordered region spans residues Val83–Gly108. Residues Lys97–Thr106 show a composition bias toward polar residues. Position 106 is a phosphothreonine (Thr106). 2 positions are modified to phosphoserine: Ser109 and Ser121. Glycyl lysine isopeptide (Lys-Gly) (interchain with G-Cter in SUMO2) cross-links involve residues Lys139 and Lys148. Residue Ser161 is modified to Phosphoserine. Lys195 is covalently cross-linked (Glycyl lysine isopeptide (Lys-Gly) (interchain with G-Cter in SUMO2)). The residue at position 197 (Ser197) is a Phosphoserine. Glycyl lysine isopeptide (Lys-Gly) (interchain with G-Cter in SUMO2) cross-links involve residues Lys201 and Lys232. Ser242 carries the phosphoserine modification. Lys250 is covalently cross-linked (Glycyl lysine isopeptide (Lys-Gly) (interchain with G-Cter in SUMO1); alternate). Residue Lys250 forms a Glycyl lysine isopeptide (Lys-Gly) (interchain with G-Cter in SUMO2); alternate linkage. The interval Gly267–Gln291 is disordered. Residues Lys273, Lys289, Lys327, Lys400, Lys428, and Lys430 each participate in a glycyl lysine isopeptide (Lys-Gly) (interchain with G-Cter in SUMO2) cross-link. A compositionally biased stretch (polar residues) spans Gln280–Thr290. 9 MYM-type zinc fingers span residues Gln362–Val402, Lys414–Val457, His464–Gln499, Lys510–Ile544, Glu554–Leu592, Arg600–Gly631, Phe708–Val742, Lys749–Asn788, and Glu795–Leu829. Glycyl lysine isopeptide (Lys-Gly) (interchain with G-Cter in SUMO2) cross-links involve residues Lys1035 and Lys1062. Residues Ser1065 and Ser1072 each carry the phosphoserine modification. Residues Lys1081 and Lys1128 each participate in a glycyl lysine isopeptide (Lys-Gly) (interchain with G-Cter in SUMO2) cross-link. The tract at residues Asp1124 to Pro1185 is disordered. Over residues Ser1125 to Thr1135 the composition is skewed to basic and acidic residues. Positions Ser1161–Ser1182 are enriched in basic residues. Residues Ser1182 and Ser1257 each carry the phosphoserine modification. Lys1432 is covalently cross-linked (Glycyl lysine isopeptide (Lys-Gly) (interchain with G-Cter in SUMO2)). A phosphoserine mark is found at Ser1540, Ser1543, and Ser1548.

Its function is as follows. Plays a role in the regulation of cell morphology and cytoskeletal organization. The protein is Zinc finger MYM-type protein 4 (Zmym4) of Mus musculus (Mouse).